The sequence spans 208 residues: Thymidylate kinase (208 aa).

Residue 10–17 (GPEGSGKT) participates in ATP binding.

This sequence belongs to the thymidylate kinase family.

The catalysed reaction is dTMP + ATP = dTDP + ADP. Functionally, phosphorylation of dTMP to form dTDP in both de novo and salvage pathways of dTTP synthesis. The protein is Thymidylate kinase of Bacillus cereus (strain ATCC 14579 / DSM 31 / CCUG 7414 / JCM 2152 / NBRC 15305 / NCIMB 9373 / NCTC 2599 / NRRL B-3711).